Here is a 1370-residue protein sequence, read N- to C-terminus: MPYSYTEKKRIRKSFAKREDVQNVPFLLATQLQSYLTFLQAETATADRVNEGLQAAFTSIFPIVSHNGMARLEFVSYALGEPVFDVKECQQRGLTYASPLRAKVRLVLLDREVSKPTIKEVKEQEVYMGEIPLMTTTGSFVINGTERVIVSQLHRSPGVFFEHDRGKTHSSGKLLFSARVIPYRGSWLDFEFDPKDVLFFRVDRRRKMPVTILLKAIGMTPESILAHFFDFDNFELKSEGAMMEFVPERWKGEMARFDITDRAGKVIVEKDKRINAKHLRDLANGGIQRISVPEDFLYGRVLAKNVVDPDTGEVIALANDEITESVLDAMRAAKVLDLQTLYTNDLDRGPYISQTLRTDETVDQTAARVAIYRMMRPGEPPTEEAVEALFQRLFYSEETYDLSRVGRMKVNSRLGRGDDANGPMTLTDEDILETIKVLVELRNGRGQIDDIDHLGNRRVRCVGELAENQFRAGLVRVERAVKERLGQAETENLMPHDLINSKPISAAIKEFFGSSQLSQFMDQTNPLSEITHKRRVSALGPGGLTRERAGFEVRDVHPTHYGRVCPIETPEGPNIGLINSMALYARLNEYGFLETPYRKIIDGRVSDQIDYLSAIEESHYVIAQANAALDAEGRFVDDLVACREAGETMLTSPVNVHYMDVAPSQIVSVAASLIPFLEHDDANRALMGANMQRQAVPCLRPEKPLVGTGIERTVAVDSGTTVQALRGGLVDHVDAERVVIRVNDEENVAGEVGVDIYNLIKYTRSNQNTNINQRPIVKRGDRVAKGDVLADGASTDLGELALGQNMLIAFMPWNGYNFEDSILISERVVADDRYTSVHIEELTVVARDTKLGPEEITRDISNLAETQLNRLDESGIVYIGAEVSADDVLVGKVTPKGETQLTPEEKLLRAIFGEKASDVKDTSLRVPSGMTGTVIDVQVFTREGIVRDKRAQSIIDDELRRYRQDLNDQLRIVENDQFDRIEKLLVGKTVNGGPRKLAKGATVTKAYLADLDRWQWFDIRLSDEPHAVVLEQAKESLEQKRHQFDLAFEEKRKKLTQGDELPPGVLKMIKVYLAVKRRLQPGDKMAGRHGNKGVVSRITPVEDMPHMADGTTADIVLNPLGVPSRMNVGQVLEVHLGWAAKGVGQRIADMLQDERTAQVKNIRAYLEKVYNTTGTGARISELSDEEVIELANNLKRGVPFATPVFDGATEDEITMMLELAYPDDVAKRMQLTPSRAQAWLFDGRTGEKFERPVTIGYMHYLKLHHLVDDKMHARSTGPYSLVTQQPLGGKAQFGGQRFGEMEVWALEAYGASYTLQEMLTVKSDDITGRTKVYENIVKGDHVIDAGMPESFNVLVKEIRSLALDMDLERN.

It belongs to the RNA polymerase beta chain family. In terms of assembly, the RNAP catalytic core consists of 2 alpha, 1 beta, 1 beta' and 1 omega subunit. When a sigma factor is associated with the core the holoenzyme is formed, which can initiate transcription.

The enzyme catalyses RNA(n) + a ribonucleoside 5'-triphosphate = RNA(n+1) + diphosphate. Functionally, DNA-dependent RNA polymerase catalyzes the transcription of DNA into RNA using the four ribonucleoside triphosphates as substrates. The protein is DNA-directed RNA polymerase subunit beta of Bordetella avium (strain 197N).